Here is a 618-residue protein sequence, read N- to C-terminus: Membrane protein insertase YidC (618 aa).

The next 6 helical transmembrane spans lie at 3-23 (KNTI…SFLS), 363-383 (WGLS…IVVF), 439-459 (LPML…PSAI), 478-498 (FITF…FCLL), 520-540 (PQMA…LFVL), and 545-565 (SGLN…MIIL).

The protein belongs to the OXA1/ALB3/YidC family. Type 1 subfamily. In terms of assembly, interacts with the Sec translocase complex via SecD. Specifically interacts with transmembrane segments of nascent integral membrane proteins during membrane integration.

It is found in the cell membrane. Functionally, required for the insertion and/or proper folding and/or complex formation of integral membrane proteins into the membrane. Involved in integration of membrane proteins that insert both dependently and independently of the Sec translocase complex, as well as at least some lipoproteins. Aids folding of multispanning membrane proteins. The chain is Membrane protein insertase YidC from Bacteroides fragilis (strain YCH46).